Here is a 165-residue protein sequence, read N- to C-terminus: Choriogonadotropin subunit beta 7 (165 aa).

Positions 1 to 20 (MEMFQGLLLLLLLSMGGTWA) are cleaved as a signal peptide. 6 disulfides stabilise this stretch: C29-C77, C43-C92, C46-C130, C54-C108, C58-C110, and C113-C120. Residues N33 and N50 are each glycosylated (N-linked (GlcNAc...) asparagine). Positions 131–165 (DDPRFQASSSSKAPPPSLPSPSRLPGPSDTPILPQ) are disordered. O-linked (GalNAc...) serine glycosylation is found at S141, S147, S152, and S158. A compositionally biased stretch (pro residues) spans 143–154 (APPPSLPSPSRL).

The protein belongs to the glycoprotein hormones subunit beta family. Heterodimer of a common alpha chain identical in LH, FSH, TSH and HCG and a unique beta chain distinct in each of the hormones and confers receptor and biological specificity. As to expression, high expression in the placenta throughout pregnancy.

The protein localises to the secreted. Beta subunit of the human chorionic gonadotropin (hCG). hCG is a complex glycoprotein composed of two glycosylated subunits alpha and beta which are non-covalently associated. The alpha subunit is identical to those in the pituitary gonadotropin hormones (LH, FSH and TSH). The beta subunits are distinct in each of the hormones and confer receptor and biological specificity. Has an essential role for pregnancy and maternal adaptation. Stimulates the ovaries to synthesize the steroids that are essential for the maintenance of pregnancy. The chain is Choriogonadotropin subunit beta 7 from Homo sapiens (Human).